A 203-amino-acid polypeptide reads, in one-letter code: Recombination protein RecR (203 aa).

A C4-type zinc finger spans residues C57 to C73. The Toprim domain occupies N81 to P175.

Belongs to the RecR family.

Functionally, may play a role in DNA repair. It seems to be involved in an RecBC-independent recombinational process of DNA repair. It may act with RecF and RecO. The sequence is that of Recombination protein RecR from Pelagibacter ubique (strain HTCC1062).